The following is a 388-amino-acid chain: Succinate--CoA ligase [ADP-forming] subunit beta (388 aa).

Positions 9–244 (KDLLSSYDIA…PSQENVRDVL (236 aa)) constitute an ATP-grasp domain. ATP-binding positions include Lys-46, 53–55 (GRG), Val-102, and Glu-107. Mg(2+)-binding residues include Asn-199 and Asp-213. Residues Asn-264 and 321–323 (GIM) each bind substrate.

The protein belongs to the succinate/malate CoA ligase beta subunit family. As to quaternary structure, heterotetramer of two alpha and two beta subunits. Mg(2+) serves as cofactor.

It catalyses the reaction succinate + ATP + CoA = succinyl-CoA + ADP + phosphate. The enzyme catalyses GTP + succinate + CoA = succinyl-CoA + GDP + phosphate. Its pathway is carbohydrate metabolism; tricarboxylic acid cycle; succinate from succinyl-CoA (ligase route): step 1/1. Functionally, succinyl-CoA synthetase functions in the citric acid cycle (TCA), coupling the hydrolysis of succinyl-CoA to the synthesis of either ATP or GTP and thus represents the only step of substrate-level phosphorylation in the TCA. The beta subunit provides nucleotide specificity of the enzyme and binds the substrate succinate, while the binding sites for coenzyme A and phosphate are found in the alpha subunit. The sequence is that of Succinate--CoA ligase [ADP-forming] subunit beta from Chlamydia felis (strain Fe/C-56) (Chlamydophila felis).